Consider the following 475-residue polypeptide: Ras-GEF domain-containing family member 1B-B (475 aa).

Over residues 1–19 (MPQTTPYSSKFNPSAYSSS) the composition is skewed to polar residues. Residues 1–25 (MPQTTPYSSKFNPSAYSSSHSHRQP) form a disordered region. Positions 36 to 166 (RDNKLVSGSL…LIQRLLRKLT (131 aa)) constitute an N-terminal Ras-GEF domain. The Ras-GEF domain maps to 209–456 (DPFIFAQQLT…QLASYESEGP (248 aa)). A disordered region spans residues 452–475 (ESEGPENNLERDTRRSLRSSLSRM).

Its function is as follows. Guanine nucleotide exchange factor (GEF) for Ras family proteins. The protein is Ras-GEF domain-containing family member 1B-B of Danio rerio (Zebrafish).